Reading from the N-terminus, the 212-residue chain is ATP phosphoribosyltransferase (212 aa).

Belongs to the ATP phosphoribosyltransferase family. Short subfamily. As to quaternary structure, heteromultimer composed of HisG and HisZ subunits.

It localises to the cytoplasm. The enzyme catalyses 1-(5-phospho-beta-D-ribosyl)-ATP + diphosphate = 5-phospho-alpha-D-ribose 1-diphosphate + ATP. It functions in the pathway amino-acid biosynthesis; L-histidine biosynthesis; L-histidine from 5-phospho-alpha-D-ribose 1-diphosphate: step 1/9. Functionally, catalyzes the condensation of ATP and 5-phosphoribose 1-diphosphate to form N'-(5'-phosphoribosyl)-ATP (PR-ATP). Has a crucial role in the pathway because the rate of histidine biosynthesis seems to be controlled primarily by regulation of HisG enzymatic activity. This Citrifermentans bemidjiense (strain ATCC BAA-1014 / DSM 16622 / JCM 12645 / Bem) (Geobacter bemidjiensis) protein is ATP phosphoribosyltransferase.